We begin with the raw amino-acid sequence, 304 residues long: uncharacterized protein (304 aa).

The next 10 helical transmembrane spans lie at 5-25, 42-62, 68-88, 96-116, 120-140, 150-170, 178-198, 215-235, 245-265, and 268-288; these read TIIL…FIAI, FLLA…PLLF, IFQL…ILYG, IASV…FIFF, LYFF…IILF, TIKG…IYLY, ISIL…FLVI, ILAT…SYFY, ASTI…FVWG, and IGID…ITIF. 2 consecutive EamA domains span residues 16-140 and 162-288; these read ITWG…IILF and TSHA…ITIF.

This sequence belongs to the EamA transporter family.

Its subcellular location is the cell membrane. This is an uncharacterized protein from Buchnera aphidicola subsp. Schlechtendalia chinensis.